Here is a 152-residue protein sequence, read N- to C-terminus: Ribonuclease H (152 aa).

Residues 1–142 (MKEVTIYTDG…CDELARAAIA (142 aa)) enclose the RNase H type-1 domain. Residues D9, E47, D69, and D134 each coordinate Mg(2+).

Belongs to the RNase H family. As to quaternary structure, monomer. The cofactor is Mg(2+).

Its subcellular location is the cytoplasm. It carries out the reaction Endonucleolytic cleavage to 5'-phosphomonoester.. Endonuclease that specifically degrades the RNA of RNA-DNA hybrids. The chain is Ribonuclease H from Moorella thermoacetica (strain ATCC 39073 / JCM 9320).